A 239-amino-acid polypeptide reads, in one-letter code: MNIEQFQSMLEEKGIPLSSRQLEQFEIYFETLVEWNEKMNLTAITEKEEVYLKHFFDSITAAFYYDFSKPFSICDVGAGAGFPSIPLKICFPHLKVTIVDSLQKRINFLNHLAQKLELSDVAFCHDRAETFGKKEGVREAYDIVMARAVARLSVLSELCLPLVKVGGTFIAMKGAAANEEIENGKYALEVLGGDLKEMSTFQLPFEESERNILLIEKKRKTPKKYPRKPGTPNKLPIEK.

S-adenosyl-L-methionine contacts are provided by residues glycine 77, phenylalanine 82, 128–129 (AE), and arginine 147.

This sequence belongs to the methyltransferase superfamily. RNA methyltransferase RsmG family.

Its subcellular location is the cytoplasm. Its function is as follows. Specifically methylates the N7 position of guanine in position 535 of 16S rRNA. The chain is Ribosomal RNA small subunit methyltransferase G from Bacillus cereus (strain AH187).